A 244-amino-acid chain; its full sequence is Large ribosomal subunit protein uL30w (244 aa).

Belongs to the universal ribosomal protein uL30 family.

The chain is Large ribosomal subunit protein uL30w (RPL7D) from Arabidopsis thaliana (Mouse-ear cress).